The following is a 128-amino-acid chain: VHWTAEEKALVNVVWSKTDHQAVVANALGRLFVVYPWTKRYFAGDSAVQTHAGKVVSALTLAYNHIDDVKPHKHYEGFHVDPENFRLLANCLNVELGHTLHKEFTPELHAAWNKFSNVVVDALSKGYH.

The Globin domain occupies 2 to 128; sequence HWTAEEKALV…VVDALSKGYH (127 aa). 2 residues coordinate heme b: H51 and H74.

The protein belongs to the globin family. Hb 1 is a heterotetramer of two alpha and two beta-1 chains. In terms of tissue distribution, red blood cells (at protein level).

Functionally, involved in oxygen transport from gills to the various peripheral tissues. This is Hemoglobin subunit beta-1 from Somniosus microcephalus (Greenland sleeper shark).